The chain runs to 524 residues: 11-oxo-beta-amyrin 30-oxidase (524 aa).

Residues glycine 9–leucine 29 traverse the membrane as a helical segment. Cysteine 472 is a heme binding site.

Belongs to the cytochrome P450 family. Requires heme as cofactor. In terms of tissue distribution, expressed in flowers. Detected in roots upon salt treatment.

Its subcellular location is the membrane. The enzyme catalyses 11-oxo-beta-amyrin + 3 reduced [NADPH--hemoprotein reductase] + 3 O2 = glycyrrhetinate + 3 oxidized [NADPH--hemoprotein reductase] + 4 H2O + 4 H(+). Involved in the biosynthesis of triterpenoid saponins. Catalyzes three sequential oxidation steps at C-30 of 11-oxo-beta-amyrin. Also able to catalyze sequential C-30 hydroxylation of beta-amyrin to produce 30-hydroxy-beta-amyrin and 11-deoxoglycyrrhetinic acid. The protein is 11-oxo-beta-amyrin 30-oxidase (CYP72A63) of Medicago truncatula (Barrel medic).